Reading from the N-terminus, the 200-residue chain is Small ribosomal subunit protein uS4c (200 aa).

In terms of domain architecture, S4 RNA-binding spans 90–150 (MRLDNIIFRL…NRKESVIIKN (61 aa)).

The protein belongs to the universal ribosomal protein uS4 family. In terms of assembly, part of the 30S ribosomal subunit. Contacts protein S5. The interaction surface between S4 and S5 is involved in control of translational fidelity.

The protein localises to the plastid. Its subcellular location is the chloroplast. One of the primary rRNA binding proteins, it binds directly to 16S rRNA where it nucleates assembly of the body of the 30S subunit. In terms of biological role, with S5 and S12 plays an important role in translational accuracy. This chain is Small ribosomal subunit protein uS4c (rps4), found in Pellia neesiana (Liverwort).